A 1444-amino-acid polypeptide reads, in one-letter code: Rho GTPase-activating protein 31 (1444 aa).

In terms of domain architecture, Rho-GAP spans 21 to 216 (CDLTEYLESS…FILNHVDQIF (196 aa)). Serine 272 is modified (phosphoserine). Threonine 286 carries the phosphothreonine modification. Serine 346, serine 349, and serine 387 each carry phosphoserine. Residues 398-427 (WGQEGMPPGAEGGFDVSSDRSHLQGAQARP) are disordered. At serine 476 the chain carries Phosphoserine. Residues 504 to 631 (TNSTPCRTPP…ESSTLQESPR (128 aa)) form a disordered region. The span at 515–534 (ELQSLSSLEEFSFHGSESGG) shows a compositional bias: low complexity. Positions 600–619 (NELEKRPNPEKVVEEGREAG) are enriched in basic and acidic residues. Threonine 679 is modified (phosphothreonine). 2 disordered regions span residues 688–893 (SSLG…EDDT) and 906–1108 (EPWE…SSLN). Phosphoserine is present on residues serine 701 and serine 712. A compositionally biased stretch (polar residues) spans 722–734 (PANQSTQGASTAA). Over residues 735–745 (SREKPEPEQGL) the composition is skewed to basic and acidic residues. Positions 777–790 (LSPPLPPAPPPPTP) are enriched in pro residues. At serine 778 the chain carries Phosphoserine. Phosphothreonine is present on threonine 789. Over residues 803-817 (GPEREDSSRKLRTDL) the composition is skewed to basic and acidic residues. Positions 822 to 834 (LKSQDSPEISSLC) are enriched in polar residues. The span at 839–848 (ATPRHSDKQN) shows a compositional bias: basic and acidic residues. Positions 960 to 977 (TVKSQWTLEVPSSSSCAN) are enriched in polar residues. Serine 974 carries the post-translational modification Phosphoserine. The segment covering 992–1008 (PRREITGWDEKALRSFR) has biased composition (basic and acidic residues). Positions 1028 to 1038 (VQPNPAETSPI) are enriched in polar residues. Residues 1064–1075 (GPESSKESSPSV) are compositionally biased toward low complexity. A phosphoserine mark is found at serine 1105, serine 1106, and serine 1178. Composition is skewed to polar residues over residues 1211–1224 (QIPQPLPSQSSGEN) and 1234–1245 (EGPSSTSGTTQK). Residues 1211-1346 (QIPQPLPSQS…HRSRPGRPQS (136 aa)) are disordered. Positions 1246-1265 (PAKDDSPSSLESSKEEKPKQ) are enriched in basic and acidic residues. 2 stretches are compositionally biased toward polar residues: residues 1292–1303 (PGSSNLLSTQDA) and 1314–1323 (TEPSGDNLLS).

As to quaternary structure, interacts with ITSN1, which inhibits GAP activity. Interacts with PARVA. Interacts with GTP-loaded RHOU. In terms of processing, phosphorylation on Thr-789 reduces GAP activity.

The protein localises to the cell projection. The protein resides in the lamellipodium. It is found in the cell junction. Its subcellular location is the focal adhesion. Functionally, functions as a GTPase-activating protein (GAP) for RAC1 and CDC42. Required for cell spreading, polarized lamellipodia formation and cell migration. This chain is Rho GTPase-activating protein 31 (ARHGAP31), found in Homo sapiens (Human).